A 401-amino-acid chain; its full sequence is Probable tRNA sulfurtransferase (401 aa).

Residues Glu60–Asp165 enclose the THUMP domain. Residues Met183–Leu184, His208–Phe209, Arg265, Gly287, and Gln296 contribute to the ATP site.

The protein belongs to the ThiI family.

The protein resides in the cytoplasm. The catalysed reaction is [ThiI sulfur-carrier protein]-S-sulfanyl-L-cysteine + a uridine in tRNA + 2 reduced [2Fe-2S]-[ferredoxin] + ATP + H(+) = [ThiI sulfur-carrier protein]-L-cysteine + a 4-thiouridine in tRNA + 2 oxidized [2Fe-2S]-[ferredoxin] + AMP + diphosphate. The enzyme catalyses [ThiS sulfur-carrier protein]-C-terminal Gly-Gly-AMP + S-sulfanyl-L-cysteinyl-[cysteine desulfurase] + AH2 = [ThiS sulfur-carrier protein]-C-terminal-Gly-aminoethanethioate + L-cysteinyl-[cysteine desulfurase] + A + AMP + 2 H(+). Its pathway is cofactor biosynthesis; thiamine diphosphate biosynthesis. In terms of biological role, catalyzes the ATP-dependent transfer of a sulfur to tRNA to produce 4-thiouridine in position 8 of tRNAs, which functions as a near-UV photosensor. Also catalyzes the transfer of sulfur to the sulfur carrier protein ThiS, forming ThiS-thiocarboxylate. This is a step in the synthesis of thiazole, in the thiamine biosynthesis pathway. The sulfur is donated as persulfide by IscS. In Geobacillus thermodenitrificans (strain NG80-2), this protein is Probable tRNA sulfurtransferase.